Consider the following 156-residue polypeptide: Small ribosomal subunit protein uS7 (156 aa).

This sequence belongs to the universal ribosomal protein uS7 family. Part of the 30S ribosomal subunit. Contacts proteins S9 and S11.

Its function is as follows. One of the primary rRNA binding proteins, it binds directly to 16S rRNA where it nucleates assembly of the head domain of the 30S subunit. Is located at the subunit interface close to the decoding center, probably blocks exit of the E-site tRNA. In Photorhabdus laumondii subsp. laumondii (strain DSM 15139 / CIP 105565 / TT01) (Photorhabdus luminescens subsp. laumondii), this protein is Small ribosomal subunit protein uS7.